We begin with the raw amino-acid sequence, 217 residues long: GrpE protein homolog 1, mitochondrial (217 aa).

The N-terminal 27 residues, 1–27, are a transit peptide targeting the mitochondrion; it reads MAARCVRLARRSLPALALSFRPSPRLL. The segment at 37–56 is disordered; that stretch reads GQNLDEDLGHCEPKTDPPSA. Lys94 is subject to N6-acetyllysine; alternate. Lys94 is modified (N6-succinyllysine; alternate). Lys100 bears the N6-acetyllysine mark. Lys120 is subject to N6-succinyllysine. Lys215 is modified (N6-acetyllysine; alternate). The residue at position 215 (Lys215) is an N6-succinyllysine; alternate.

The protein belongs to the GrpE family. In terms of assembly, probable component of the PAM complex at least composed of a mitochondrial HSP70 protein, GRPEL1 or GRPEL2, TIMM44, TIMM16/PAM16 and TIMM14/DNAJC19. Binds to HSP70, HSC70 and HSJ1B.

It localises to the mitochondrion matrix. Essential component of the PAM complex, a complex required for the translocation of transit peptide-containing proteins from the inner membrane into the mitochondrial matrix in an ATP-dependent manner. Seems to control the nucleotide-dependent binding of mitochondrial HSP70 to substrate proteins. This chain is GrpE protein homolog 1, mitochondrial (Grpel1), found in Mus musculus (Mouse).